Reading from the N-terminus, the 1271-residue chain is Protein flightless-1 homolog (1271 aa).

Met-1 is subject to N-acetylmethionine. The segment at 1 to 427 (MEATGVLPFV…SGSKDPLARK (427 aa)) is interaction with LRRFIP1 and LRRFIP2. LRR repeat units lie at residues 7-32 (LPFV…VKAM), 33-55 (TSLR…LAAL), 56-78 (QKLE…LSSL), 80-103 (SLRA…IFKL), 104-126 (DDLS…LENA), 127-149 (KNML…LFIN), 150-173 (LTDL…MRRL), 175-196 (HLQT…QLPA), 197-222 (MMAL…LEGL), 223-245 (SNLS…LYTL), 247-268 (SLRR…IDQW), 269-291 (VHLE…ICKL), 293-316 (KLKK…IGKL), 317-339 (TSLE…LCRC), 340-363 (PKLK…HFLT), and 365-385 (IQVL…PADR). At Lys-21 the chain carries N6-acetyllysine. The residue at position 406 (Ser-406) is a Phosphoserine. Ser-436 is subject to Phosphoserine; by SGK3. Positions 495–827 (VGQLPGLTIW…VVSRSLEGTE (333 aa)) are interaction with ACTL6A. Gelsolin-like repeat units follow at residues 509-591 (FVPV…EEFL), 629-703 (NIKL…PGFW), and 759-831 (LMPG…AQVF). Ser-860 carries the post-translational modification Phosphoserine. The segment at 951–977 (KTEDKEGKASAEAREGEEAAAEAEEKQ) is disordered. Positions 952–967 (TEDKEGKASAEAREGE) are enriched in basic and acidic residues. Residues 968–977 (EAAAEAEEKQ) are compositionally biased toward acidic residues. The stretch at 1183–1256 (KCSDFCQDDL…VRKGNEQRAF (74 aa)) is one Gelsolin-like 4 repeat.

As to quaternary structure, interacts with actin, ACTL6A and NCOA2. Interacts with CARM1. Interacts with LRRFIP1, LRRFIP2 and MYD88. Upon LPS stimulation, LRRFIP2 competes for MYD88-binding; LRRFIP1 constitutively blocks the interaction with MyD88, even in the absence of LPS. Interacts with the nuclear receptors ESR1 and THRB. Interacts with SGK3. Interacts (via the gelsolin-like region) with TMOD1 and TMOD3. Interacts with LMOD2, VCL, GSN and DES. As to expression, expressed in blastocyst.

It localises to the nucleus. It is found in the cytoplasm. The protein localises to the cytoskeleton. The protein resides in the microtubule organizing center. Its subcellular location is the centrosome. It localises to the cell junction. It is found in the focal adhesion. The protein localises to the cell projection. The protein resides in the podosome. Its function is as follows. Is a regulator of actin polymerization, required for proper myofibril organization and regulation of the length of sarcomeric thin filaments. It also plays a role in the assembly of cardiomyocyte cell adhesion complexes. Regulates cytoskeletal rearrangements involved in cytokinesis and cell migration, by inhibiting Rac1-dependent paxillin phosphorylation. May play a role as coactivator in transcriptional activation by hormone-activated nuclear receptors (NR) and acts in cooperation with NCOA2 and CARM1. Involved in estrogen hormone signaling. In Mus musculus (Mouse), this protein is Protein flightless-1 homolog (Flii).